Consider the following 1079-residue polypeptide: Translation initiation factor IF-2 (1079 aa).

Basic and acidic residues-rich tracts occupy residues 52 to 65 (VQAQRDGGARKEGN), 75 to 90 (RDGDRASARAEAKAPE), and 102 to 134 (APERAEEADKPAVAKPAKAPETEAHARARKEPQ). Positions 52–488 (VQAQRDGGAR…RGKKDVRPAA (437 aa)) are disordered. Low complexity predominate over residues 150-184 (APVAKVVEAAPAETPAPEAPAVKATVTAEAAPAKT). The segment covering 185 to 194 (VEPESERPQA) has biased composition (basic and acidic residues). A compositionally biased stretch (low complexity) spans 276 to 291 (AAVAQQQMQQQAAQQQ). The span at 306–327 (GGYRPEGQREGGYRPEGQREGG) shows a compositional bias: basic and acidic residues. Composition is skewed to low complexity over residues 348–370 (EGGYRPGAPRPEGGYRPAGGPRP) and 380–398 (PGAPRPEGGYRPAGGAPRP). Over residues 419-429 (PRPGGFGGAPG) the composition is skewed to gly residues. The span at 461 to 471 (PRGRSDDDVMR) shows a compositional bias: basic and acidic residues. Residues 473–482 (PRGRGKRGKK) are compositionally biased toward basic residues. Positions 578 to 745 (TRPPVVTIMG…LIAIQAEILE (168 aa)) constitute a tr-type G domain. Residues 587 to 594 (GHVDHGKT) are G1. 587–594 (GHVDHGKT) is a binding site for GTP. The interval 612-616 (GITQH) is G2. Residues 633–636 (DTPG) are G3. GTP contacts are provided by residues 633-637 (DTPGH) and 687-690 (NKMD). A G4 region spans residues 687 to 690 (NKMD). Residues 723 to 725 (SAK) form a G5 region.

It belongs to the TRAFAC class translation factor GTPase superfamily. Classic translation factor GTPase family. IF-2 subfamily.

The protein localises to the cytoplasm. Its function is as follows. One of the essential components for the initiation of protein synthesis. Protects formylmethionyl-tRNA from spontaneous hydrolysis and promotes its binding to the 30S ribosomal subunits. Also involved in the hydrolysis of GTP during the formation of the 70S ribosomal complex. This chain is Translation initiation factor IF-2, found in Nitratidesulfovibrio vulgaris (strain DP4) (Desulfovibrio vulgaris).